The following is a 387-amino-acid chain: Testis-expressed protein 9 (387 aa).

Disordered regions lie at residues 1-25 (MAGRSVRVPRRGSAGTQSRGQLAAG) and 58-133 (REQQ…LKYP). Polar residues-rich tracts occupy residues 70 to 91 (ALTTSCKEEGGSSSRDLLSSEG) and 103 to 115 (KNTGPVNKIQNRL). Positions 184-347 (IGTEAQIRFL…ERQKGELMIG (164 aa)) form a coiled coil.

As to expression, testis-specific.

Its subcellular location is the cytoplasm. It localises to the cytoskeleton. It is found in the microtubule organizing center. The protein resides in the centrosome. The protein localises to the centriolar satellite. This chain is Testis-expressed protein 9 (Tex9), found in Mus musculus (Mouse).